The following is a 354-amino-acid chain: Isopentenyl-diphosphate delta-isomerase (354 aa).

11–12 (KK) contacts substrate. Residues Ser-67, 68-70 (SMT), Ser-98, and Asn-126 contribute to the FMN site. 98 to 100 (SFK) contacts substrate. Residue Gln-160 participates in substrate binding. Glu-161 serves as a coordination point for Mg(2+). Residues Lys-192, Thr-222, and 289 to 290 (AA) each bind FMN.

Belongs to the IPP isomerase type 2 family. In terms of assembly, homooctamer. Dimer of tetramers. The cofactor is FMN. Requires NADPH as cofactor. Mg(2+) serves as cofactor.

The protein resides in the cytoplasm. It catalyses the reaction isopentenyl diphosphate = dimethylallyl diphosphate. Its function is as follows. Involved in the biosynthesis of isoprenoids. Catalyzes the 1,3-allylic rearrangement of the homoallylic substrate isopentenyl (IPP) to its allylic isomer, dimethylallyl diphosphate (DMAPP). This Borreliella afzelii (strain PKo) (Borrelia afzelii) protein is Isopentenyl-diphosphate delta-isomerase.